The chain runs to 263 residues: uncharacterized protein (263 aa).

A WD repeat occupies 53–89; the sequence is SAVTASKFSPDGRWLVNLTDQGYVQLWDVHKGERVKT.

This is an uncharacterized protein from Deinococcus radiodurans (strain ATCC 13939 / DSM 20539 / JCM 16871 / CCUG 27074 / LMG 4051 / NBRC 15346 / NCIMB 9279 / VKM B-1422 / R1).